Consider the following 290-residue polypeptide: Pantothenate synthetase (290 aa).

Met-30–His-37 lines the ATP pocket. The Proton donor role is filled by His-37. Gln-61 lines the (R)-pantoate pocket. Gln-61 is a binding site for beta-alanine. Gly-147–Asp-150 provides a ligand contact to ATP. A (R)-pantoate-binding site is contributed by Gln-153. Residues Val-176 and Lys-184–Arg-187 contribute to the ATP site.

Belongs to the pantothenate synthetase family. In terms of assembly, homodimer.

It localises to the cytoplasm. The enzyme catalyses (R)-pantoate + beta-alanine + ATP = (R)-pantothenate + AMP + diphosphate + H(+). The protein operates within cofactor biosynthesis; (R)-pantothenate biosynthesis; (R)-pantothenate from (R)-pantoate and beta-alanine: step 1/1. In terms of biological role, catalyzes the condensation of pantoate with beta-alanine in an ATP-dependent reaction via a pantoyl-adenylate intermediate. The sequence is that of Pantothenate synthetase from Chlorobium chlorochromatii (strain CaD3).